The sequence spans 164 residues: Protein-export protein SecB (164 aa).

It belongs to the SecB family. Homotetramer, a dimer of dimers. One homotetramer interacts with 1 SecA dimer.

Its subcellular location is the cytoplasm. In terms of biological role, one of the proteins required for the normal export of preproteins out of the cell cytoplasm. It is a molecular chaperone that binds to a subset of precursor proteins, maintaining them in a translocation-competent state. It also specifically binds to its receptor SecA. This Janthinobacterium sp. (strain Marseille) (Minibacterium massiliensis) protein is Protein-export protein SecB.